The sequence spans 283 residues: Protein FAM78A (283 aa).

This sequence belongs to the FAM78 family.

The chain is Protein FAM78A (Fam78a) from Mus musculus (Mouse).